The primary structure comprises 241 residues: ATP synthase subunit a (241 aa).

Transmembrane regions (helical) follow at residues 30 to 50, 91 to 111, 128 to 148, 193 to 213, and 214 to 234; these read GQVFLTSWIVIGAILALVVVG, FIGTLFLFIFVSNWGGSLVPW, INTTVALALLVSLSYFYAGLS, LVVAVLVFLVPLFLPVPVMFL, and GLFTSAIQALIFATLAAYYIG.

This sequence belongs to the ATPase A chain family. F-type ATPases have 2 components, CF(1) - the catalytic core - and CF(0) - the membrane proton channel. CF(1) has five subunits: alpha(3), beta(3), gamma(1), delta(1), epsilon(1). CF(0) has four main subunits: a, b, b' and c.

Its subcellular location is the cellular thylakoid membrane. Key component of the proton channel; it plays a direct role in the translocation of protons across the membrane. The sequence is that of ATP synthase subunit a from Prochlorococcus marinus (strain MIT 9303).